Here is a 720-residue protein sequence, read N- to C-terminus: Biotin biosynthesis bifunctional protein BioWF (720 aa).

The tract at residues 1-39 (MRFSIKMRASARVSSSPSTSDGSSGDHTESRDRADRHIS) is disordered. The span at 8–23 (RASARVSSSPSTSDGS) shows a compositional bias: low complexity. Residues 24–39 (SGDHTESRDRADRHIS) are compositionally biased toward basic and acidic residues. R314 is a binding site for substrate. Residue 401 to 402 (GY) participates in pyridoxal 5'-phosphate binding. H439 provides a ligand contact to substrate. Residues S488, 513–516 (DDAH), and 564–567 (TASK) each bind pyridoxal 5'-phosphate. Residue K567 is modified to N6-(pyridoxal phosphate)lysine. Residue T684 coordinates substrate.

This sequence in the N-terminal section; belongs to the BioW family. In the C-terminal section; belongs to the class-II pyridoxal-phosphate-dependent aminotransferase family. BioF subfamily. In terms of assembly, homodimer. Mg(2+) serves as cofactor. Pyridoxal 5'-phosphate is required as a cofactor.

The catalysed reaction is heptanedioate + ATP + CoA = 6-carboxyhexanoyl-CoA + AMP + diphosphate. The enzyme catalyses 6-carboxyhexanoyl-[ACP] + L-alanine + H(+) = (8S)-8-amino-7-oxononanoate + holo-[ACP] + CO2. The protein operates within metabolic intermediate metabolism; pimeloyl-CoA biosynthesis; pimeloyl-CoA from pimelate: step 1/1. Its pathway is cofactor biosynthesis; biotin biosynthesis. In terms of biological role, catalyzes both the decarboxylative condensation of pimeloyl-[acyl-carrier protein] and L-alanine to produce 8-amino-7-oxononanoate (AON), [acyl-carrier protein], and carbon dioxide, and the transformation of pimelate into pimeloyl-CoA with concomitant hydrolysis of ATP to AMP. The sequence is that of Biotin biosynthesis bifunctional protein BioWF (bioWF) from Corynebacterium kroppenstedtii (strain DSM 44385 / JCM 11950 / CIP 105744 / CCUG 35717).